Consider the following 318-residue polypeptide: Vomeronasal type-1 receptor 45 (318 aa).

Topologically, residues 1 to 32 (MSEILFFSPQPLFSHMMNKNSRLHTHSNIKNT) are extracellular. The chain crosses the membrane as a helical span at residues 33–53 (FFSEIGIGILGNSFLLLFHIL). At 54 to 65 (KFIRGHRLRLTD) the chain is on the cytoplasmic side. A helical transmembrane segment spans residues 66 to 86 (LPIGLLSLIHLLMLLLMAFIA). The Extracellular portion of the chain corresponds to 87–109 (TDIFISRRGWDDIICKFLVYLYR). C101 and C188 are oxidised to a cystine. Residues 110-130 (VLRGLSLCTTSMLSVLQAIIL) traverse the membrane as a helical segment. Residues 131–150 (SPRSSCLAKLKHKYPHHISC) are Cytoplasmic-facing. Residues 151–171 (AIIFLSVLYMLISSHILLSII) form a helical membrane-spanning segment. Residues 172–206 (ATPNLTRNDFLYVTQSCSILPLSYVMQSMYSTLLA) lie on the Extracellular side of the membrane. An N-linked (GlcNAc...) asparagine glycan is attached at N175. Residues 207–227 (LREVFLISLMVLSTLYMVVLL) form a helical membrane-spanning segment. The Cytoplasmic segment spans residues 228–254 (CRHRKQAQHLQGTSLSPKASAEQRATQ). Residues 255-275 (TILMLMTFFVLMSIFDSIVSC) form a helical membrane-spanning segment. Topologically, residues 276 to 285 (SRTMFLDDPT) are extracellular. The helical transmembrane segment at 286–306 (SYSIHIFVMHIYATVSPFVFM) threads the bilayer. The Cytoplasmic segment spans residues 307-318 (STEKHIVNILRG).

This sequence belongs to the G-protein coupled receptor 1 family. Expressed in a subset of sensory neurons located in the apical layer of the vomeronasal organ.

It localises to the cell membrane. Its function is as follows. Putative pheromone receptor implicated in the regulation of social and reproductive behavior. This is Vomeronasal type-1 receptor 45 (Vmn1r45) from Mus musculus (Mouse).